A 204-amino-acid chain; its full sequence is Cytochrome c biogenesis ATP-binding export protein CcmA (204 aa).

The region spanning 2-203 (LEADNLECVR…PAGTVRELRL (202 aa)) is the ABC transporter domain. 34–41 (GRNGAGKT) is an ATP binding site.

Belongs to the ABC transporter superfamily. CcmA exporter (TC 3.A.1.107) family. As to quaternary structure, the complex is composed of two ATP-binding proteins (CcmA) and two transmembrane proteins (CcmB).

It localises to the cell inner membrane. The enzyme catalyses heme b(in) + ATP + H2O = heme b(out) + ADP + phosphate + H(+). In terms of biological role, part of the ABC transporter complex CcmAB involved in the biogenesis of c-type cytochromes; once thought to export heme, this seems not to be the case, but its exact role is uncertain. Responsible for energy coupling to the transport system. This is Cytochrome c biogenesis ATP-binding export protein CcmA from Dechloromonas aromatica (strain RCB).